Here is a 339-residue protein sequence, read N- to C-terminus: UDP-N-acetylglucosamine--N-acetylmuramyl-(pentapeptide) pyrophosphoryl-undecaprenol N-acetylglucosamine transferase (339 aa).

UDP-N-acetyl-alpha-D-glucosamine contacts are provided by residues T11–G13, N127, R170, S188, I235, and Q280.

The protein belongs to the glycosyltransferase 28 family. MurG subfamily.

Its subcellular location is the cell inner membrane. The catalysed reaction is di-trans,octa-cis-undecaprenyl diphospho-N-acetyl-alpha-D-muramoyl-L-alanyl-D-glutamyl-meso-2,6-diaminopimeloyl-D-alanyl-D-alanine + UDP-N-acetyl-alpha-D-glucosamine = di-trans,octa-cis-undecaprenyl diphospho-[N-acetyl-alpha-D-glucosaminyl-(1-&gt;4)]-N-acetyl-alpha-D-muramoyl-L-alanyl-D-glutamyl-meso-2,6-diaminopimeloyl-D-alanyl-D-alanine + UDP + H(+). It functions in the pathway cell wall biogenesis; peptidoglycan biosynthesis. Functionally, cell wall formation. Catalyzes the transfer of a GlcNAc subunit on undecaprenyl-pyrophosphoryl-MurNAc-pentapeptide (lipid intermediate I) to form undecaprenyl-pyrophosphoryl-MurNAc-(pentapeptide)GlcNAc (lipid intermediate II). This Thermotoga petrophila (strain ATCC BAA-488 / DSM 13995 / JCM 10881 / RKU-1) protein is UDP-N-acetylglucosamine--N-acetylmuramyl-(pentapeptide) pyrophosphoryl-undecaprenol N-acetylglucosamine transferase.